Consider the following 508-residue polypeptide: UTP--glucose-1-phosphate uridylyltransferase (508 aa).

Phosphoserine is present on Ser13. Residues 113-116, Lys127, Gln190, and Gly222 each bind UTP; that span reads LNGG. 115–116 is a binding site for substrate; it reads GG. Lys127 lines the Mg(2+) pocket. Substrate contacts are provided by residues His223 and 251-253; that span reads NID. UTP contacts are provided by Asp253 and Lys396. Residue Asp253 participates in Mg(2+) binding. The active site involves Lys396. Phosphothreonine is present on Thr426. Ser434 carries the post-translational modification Phosphoserine. Lys438 carries the N6-acetyllysine modification. Ser448 and Ser461 each carry phosphoserine. Residues 457–508 form an oligomerization region; the sequence is HLTVSGDVTFGKNVSLKGTVIIIXNHGDRIDIPPGAVLENKIVSGNLRILDH. Residues 502 to 503 are critical for end-to-end subunit interaction; that stretch reads NL.

It belongs to the UDPGP type 1 family. In terms of assembly, homooctamer.

Its subcellular location is the cytoplasm. It catalyses the reaction alpha-D-glucose 1-phosphate + UTP + H(+) = UDP-alpha-D-glucose + diphosphate. Its pathway is glycan biosynthesis; glycogen biosynthesis. Its function is as follows. UTP--glucose-1-phosphate uridylyltransferase catalyzing the conversion of glucose-1-phosphate into UDP-glucose, a crucial precursor for the production of glycogen. The sequence is that of UTP--glucose-1-phosphate uridylyltransferase (UGP2) from Sus scrofa (Pig).